Reading from the N-terminus, the 219-residue chain is Bacterial microcompartment shell protein EutL (219 aa).

2 consecutive BMC circularly permuted domains span residues 1 to 113 and 114 to 215; these read MPAL…GAAF and QWAN…ARNP. Residues D45, D46, E83, and F113 each contribute to the ethanolamine site. Positions 45-46 are part of the acidic patch lining the small pore; it reads DD. E157 lines the Zn(2+) pocket. 183 to 185 is a binding site for ethanolamine; that stretch reads TNY.

The protein belongs to the EutL/PduB family. Homotrimerizes to form a pseudohexamer. The trimers form a two-dimensional array about 37 Angstroms thick.

Its subcellular location is the bacterial microcompartment. The protein operates within amine and polyamine degradation; ethanolamine degradation. A component of the bacterial microcompartment (BMC) shell dedicated to ethanolamine degradation. Two crystal forms have been seen; a form with a closed central pore that has 3 very small (1.1-2.2 Angstroms) channels per trimer lined by acidic and aromatic residues. A form with a large central pore (8-12 Angstroms) has also been seen; this is probably a functional pore which allows molecules to enter and exit the BMC in a selective, gated manner. Another group only sees the central pore in the presence of Zn(2+); soaking crystals in ZnCl(2) leads to dramatic conformational changes that open a central pore of about 12 Angstroms. Whether Zn(2+) binding is physiologically relevant is unclear, however it suggests a gating mechanism exists. Ethanolamine-binding by the small channels has been hypothesized to stabilize the EutL central pore in a closed (non-transporting) state. An open pore is thought to be large enough to transport ATP and/or cobalamin. This Escherichia coli (strain K12) protein is Bacterial microcompartment shell protein EutL (eutL).